The sequence spans 294 residues: Acetylglutamate kinase (294 aa).

Residues 63–64 (GG), Arg85, and Asn188 contribute to the substrate site.

It belongs to the acetylglutamate kinase family. ArgB subfamily.

The protein localises to the cytoplasm. It catalyses the reaction N-acetyl-L-glutamate + ATP = N-acetyl-L-glutamyl 5-phosphate + ADP. The protein operates within amino-acid biosynthesis; L-arginine biosynthesis; N(2)-acetyl-L-ornithine from L-glutamate: step 2/4. Catalyzes the ATP-dependent phosphorylation of N-acetyl-L-glutamate. This is Acetylglutamate kinase from Methanococcus aeolicus (strain ATCC BAA-1280 / DSM 17508 / OCM 812 / Nankai-3).